The primary structure comprises 197 residues: NAD(P)H-quinone oxidoreductase subunit 6, chloroplastic (197 aa).

Helical transmembrane passes span 10 to 30 (FVLA…VLLV), 39 to 59 (LGLV…DFVA), 60 to 80 (AAQL…AVMI), 94 to 114 (IGYI…SFVI), and 147 to 167 (LLGE…AALV).

It belongs to the complex I subunit 6 family. NDH is composed of at least 16 different subunits, 5 of which are encoded in the nucleus.

Its subcellular location is the plastid. It localises to the chloroplast thylakoid membrane. The catalysed reaction is a plastoquinone + NADH + (n+1) H(+)(in) = a plastoquinol + NAD(+) + n H(+)(out). It carries out the reaction a plastoquinone + NADPH + (n+1) H(+)(in) = a plastoquinol + NADP(+) + n H(+)(out). Functionally, NDH shuttles electrons from NAD(P)H:plastoquinone, via FMN and iron-sulfur (Fe-S) centers, to quinones in the photosynthetic chain and possibly in a chloroplast respiratory chain. The immediate electron acceptor for the enzyme in this species is believed to be plastoquinone. Couples the redox reaction to proton translocation, and thus conserves the redox energy in a proton gradient. The polypeptide is NAD(P)H-quinone oxidoreductase subunit 6, chloroplastic (ndhG) (Adiantum capillus-veneris (Maidenhair fern)).